The sequence spans 277 residues: Shikimate dehydrogenase (NADP(+)) (277 aa).

Residues 15–17 and threonine 62 each bind shikimate; that span reads SKS. The Proton acceptor role is filled by lysine 66. Glutamate 78 is an NADP(+) binding site. 2 residues coordinate shikimate: asparagine 87 and aspartate 103. Residues 127–131, 151–156, and glycine 238 each bind NADP(+); these read GAGGA and NRTHEK.

Belongs to the shikimate dehydrogenase family. As to quaternary structure, homodimer.

The catalysed reaction is shikimate + NADP(+) = 3-dehydroshikimate + NADPH + H(+). It functions in the pathway metabolic intermediate biosynthesis; chorismate biosynthesis; chorismate from D-erythrose 4-phosphate and phosphoenolpyruvate: step 4/7. Functionally, involved in the biosynthesis of the chorismate, which leads to the biosynthesis of aromatic amino acids. Catalyzes the reversible NADPH linked reduction of 3-dehydroshikimate (DHSA) to yield shikimate (SA). The chain is Shikimate dehydrogenase (NADP(+)) from Shewanella frigidimarina (strain NCIMB 400).